The following is a 479-amino-acid chain: ATP-dependent protease ATPase subunit HslU (479 aa).

Residues Ile-32, 74–79 (GVGKTE), Asp-290, Glu-355, and Arg-427 contribute to the ATP site.

Belongs to the ClpX chaperone family. HslU subfamily. In terms of assembly, a double ring-shaped homohexamer of HslV is capped on each side by a ring-shaped HslU homohexamer. The assembly of the HslU/HslV complex is dependent on binding of ATP.

It localises to the cytoplasm. Its function is as follows. ATPase subunit of a proteasome-like degradation complex; this subunit has chaperone activity. The binding of ATP and its subsequent hydrolysis by HslU are essential for unfolding of protein substrates subsequently hydrolyzed by HslV. HslU recognizes the N-terminal part of its protein substrates and unfolds these before they are guided to HslV for hydrolysis. This chain is ATP-dependent protease ATPase subunit HslU, found in Leptospira interrogans serogroup Icterohaemorrhagiae serovar copenhageni (strain Fiocruz L1-130).